The sequence spans 106 residues: Nucleoid-associated protein DIP0260 (106 aa).

Belongs to the YbaB/EbfC family. Homodimer.

It localises to the cytoplasm. The protein localises to the nucleoid. In terms of biological role, binds to DNA and alters its conformation. May be involved in regulation of gene expression, nucleoid organization and DNA protection. In Corynebacterium diphtheriae (strain ATCC 700971 / NCTC 13129 / Biotype gravis), this protein is Nucleoid-associated protein DIP0260.